The following is a 163-amino-acid chain: Nucleotide-binding protein MUL_0671 (163 aa).

The protein belongs to the YajQ family.

In terms of biological role, nucleotide-binding protein. The polypeptide is Nucleotide-binding protein MUL_0671 (Mycobacterium ulcerans (strain Agy99)).